Consider the following 220-residue polypeptide: CDP-diacylglycerol--inositol 3-phosphatidyltransferase (220 aa).

Topologically, residues 1–20 (MSSNSTPEKVTAEHVLWYIP) are cytoplasmic. A helical transmembrane segment spans residues 21 to 41 (NKIGYVRVITAALSFFVMKNH). At 42–45 (PTAF) the chain is on the lumenal side. Residues 46-66 (TWLYSTSCLLDALDGTMARKY) traverse the membrane as a helical segment. Mg(2+) is bound by residues D56 and D59. 3 residues coordinate a CDP-1,2-diacyl-sn-glycerol: G60, R64, and S70. Residues 67–75 (NQVSSLGAV) lie on the Cytoplasmic side of the membrane. Residues 76–96 (LDMVTDRSSTAGLMCFLCVQY) form a helical membrane-spanning segment. D77 and D81 together coordinate Mg(2+). Catalysis depends on D81, which acts as the Proton acceptor. The Lumenal segment spans residues 97–98 (PQ). The chain crosses the membrane as a helical span at residues 99-119 (WCVFFQLMLGLDITSHYMHMY). Residues 120–145 (ASLSAGKTSHKSVGEGESRLLHLYYT) are Cytoplasmic-facing. A helical transmembrane segment spans residues 146-166 (RRDVLFTICAFNELFYAGLYL). Topologically, residues 167–170 (QLFS) are lumenal. Residues 171 to 191 (NSATFGKWTTIISFPGYVFKQ) form a helical membrane-spanning segment. The Cytoplasmic segment spans residues 192–220 (TANVVQLKRAALILADNDAKNANEKNKTY).

Belongs to the CDP-alcohol phosphatidyltransferase class-I family. The cofactor is Mn(2+). Mg(2+) is required as a cofactor.

It is found in the microsome membrane. It localises to the endoplasmic reticulum membrane. The protein localises to the golgi apparatus membrane. The protein resides in the mitochondrion outer membrane. The catalysed reaction is a CDP-1,2-diacyl-sn-glycerol + myo-inositol = a 1,2-diacyl-sn-glycero-3-phospho-(1D-myo-inositol) + CMP + H(+). In terms of biological role, catalyzes the synthesis of phosphatidylinositol (PtdIns). The polypeptide is CDP-diacylglycerol--inositol 3-phosphatidyltransferase (Saccharomyces cerevisiae (strain ATCC 204508 / S288c) (Baker's yeast)).